Consider the following 448-residue polypeptide: SVP1-like protein 2 (448 aa).

N-linked (GlcNAc...) asparagine glycosylation is found at asparagine 61, asparagine 155, asparagine 256, asparagine 280, asparagine 315, and asparagine 421. WD repeat units follow at residues 222 to 262 and 267 to 306; these read AHKN…LIKE and VDKA…NTET. Residues 416-435 form a disordered region; sequence THYSLNESLRNEDTKSAGEP. Positions 424–435 are enriched in basic and acidic residues; the sequence is LRNEDTKSAGEP.

Belongs to the WD repeat PROPPIN family. In terms of processing, N-glycosylated.

Its subcellular location is the endosome membrane. The protein localises to the prevacuolar compartment membrane. In terms of biological role, involved in piecemeal microautophagy of the nucleus (micronucleophagy). The sequence is that of SVP1-like protein 2 (HSV2) from Saccharomyces cerevisiae (strain ATCC 204508 / S288c) (Baker's yeast).